The chain runs to 263 residues: Orotidine 5'-phosphate decarboxylase (263 aa).

Residues aspartate 38, 60–62 (KTH), 91–100 (DRKFADIGNT), tyrosine 213, and arginine 232 contribute to the substrate site. Catalysis depends on lysine 93, which acts as the Proton donor.

Belongs to the OMP decarboxylase family.

The enzyme catalyses orotidine 5'-phosphate + H(+) = UMP + CO2. It functions in the pathway pyrimidine metabolism; UMP biosynthesis via de novo pathway; UMP from orotate: step 2/2. The chain is Orotidine 5'-phosphate decarboxylase (PYR4) from Rhizomucor pusillus.